The sequence spans 211 residues: Endoplasmic reticulum vesicle protein 25 (211 aa).

The first 19 residues, 1-19, serve as a signal peptide directing secretion; sequence MKSIVSVLTLLLLINAVAA. Residues 20-180 are Lumenal-facing; the sequence is LRFVLPAKDK…TNESTNRRVK (161 aa). Residues 33–121 enclose the GOLD domain; sequence PFCVRDFVKN…TKEIDLSVAI (89 aa). A helical membrane pass occupies residues 181 to 201; it reads FFSVGITLALIALGVWQIIYL. Over 202 to 211 the chain is Cytoplasmic; the sequence is RSYFRSKHII.

Belongs to the EMP24/GP25L family.

Its subcellular location is the endoplasmic reticulum membrane. It is found in the golgi apparatus membrane. Functionally, constituent of COPII-coated endoplasmic reticulum-derived transport vesicles. Required for efficient transport of a subset of secretory proteins to the Golgi. Facilitates retrograde transport from the Golgi to the endoplasmic reticulum. This Yarrowia lipolytica (strain CLIB 122 / E 150) (Yeast) protein is Endoplasmic reticulum vesicle protein 25 (ERV25).